Here is a 280-residue protein sequence, read N- to C-terminus: Cell envelope integrity protein EipB (280 aa).

The first 24 residues, 1 to 24, serve as a signal peptide directing secretion; it reads MRFVRIAAAASGATVFMWAGFAGA. A disulfide bridge links C69 with C278.

In terms of assembly, monomer.

Its subcellular location is the periplasm. Functionally, functions in the periplasm to maintain cell envelope integrity. This is Cell envelope integrity protein EipB from Brucella abortus (strain 2308).